A 475-amino-acid polypeptide reads, in one-letter code: Ribulose bisphosphate carboxylase large chain (475 aa).

Residues 1-2 (MS) constitute a propeptide that is removed on maturation. P3 is modified (N-acetylproline). K14 carries the N6,N6,N6-trimethyllysine modification. Substrate-binding residues include N123 and T173. K175 (proton acceptor) is an active-site residue. K177 is a binding site for substrate. Positions 201, 203, and 204 each coordinate Mg(2+). K201 carries the N6-carboxylysine modification. H294 acts as the Proton acceptor in catalysis. Residues R295, H327, and S379 each contribute to the substrate site.

Belongs to the RuBisCO large chain family. Type I subfamily. In terms of assembly, heterohexadecamer of 8 large chains and 8 small chains; disulfide-linked. The disulfide link is formed within the large subunit homodimers. Mg(2+) serves as cofactor. Post-translationally, the disulfide bond which can form in the large chain dimeric partners within the hexadecamer appears to be associated with oxidative stress and protein turnover.

It is found in the plastid. Its subcellular location is the chloroplast. It catalyses the reaction 2 (2R)-3-phosphoglycerate + 2 H(+) = D-ribulose 1,5-bisphosphate + CO2 + H2O. The enzyme catalyses D-ribulose 1,5-bisphosphate + O2 = 2-phosphoglycolate + (2R)-3-phosphoglycerate + 2 H(+). In terms of biological role, ruBisCO catalyzes two reactions: the carboxylation of D-ribulose 1,5-bisphosphate, the primary event in carbon dioxide fixation, as well as the oxidative fragmentation of the pentose substrate in the photorespiration process. Both reactions occur simultaneously and in competition at the same active site. The chain is Ribulose bisphosphate carboxylase large chain from Viscum album (European mistletoe).